Consider the following 137-residue polypeptide: Ribonuclease P protein component (137 aa).

This sequence belongs to the RnpA family. As to quaternary structure, consists of a catalytic RNA component (M1 or rnpB) and a protein subunit.

The enzyme catalyses Endonucleolytic cleavage of RNA, removing 5'-extranucleotides from tRNA precursor.. Its function is as follows. RNaseP catalyzes the removal of the 5'-leader sequence from pre-tRNA to produce the mature 5'-terminus. It can also cleave other RNA substrates such as 4.5S RNA. The protein component plays an auxiliary but essential role in vivo by binding to the 5'-leader sequence and broadening the substrate specificity of the ribozyme. In Porphyromonas gingivalis (strain ATCC BAA-308 / W83), this protein is Ribonuclease P protein component.